The primary structure comprises 493 residues: Matrilin-1 (493 aa).

A signal peptide spans 1 to 23 (MDGIFCALPLSLLLLLQSCGVWG). Positions 24-220 (APPQPRGTLC…THKFQEAFCV (197 aa)) constitute a VWFA 1 domain. Residue asparagine 74 is glycosylated (N-linked (GlcNAc...) asparagine). The 41-residue stretch at 221–261 (VSDLCATGDHDCEQICISTPGSYKCACKEGFTLNNDGKTCS) folds into the EGF-like domain. Disulfide bonds link cysteine 225/cysteine 236, cysteine 232/cysteine 245, and cysteine 247/cysteine 260. In terms of domain architecture, VWFA 2 spans 262-450 (ACSGGSGSAL…GKKLQMKICV (189 aa)). A coiled-coil region spans residues 462 to 492 (KFQTKVEELINTLQQKLEAVAKRIEALENKI).

In terms of assembly, homotrimer. In terms of tissue distribution, expressed in xyphoid cartilage and chondrocytes (at protein level).

The protein resides in the secreted. It is found in the extracellular space. It localises to the extracellular matrix. A major component of the extracellular matrix of non-articular cartilage. Binds to type 2 collagens and forms long concatenated protein networks as part of the extracellular matrix. Required for the network-like organization and bundling of collagen fibrils surrounding chondrocytes in the zones of maturation and hypertrophy. Required for mechanotransduction and adaption to mechanical loading in cartilage chondrocytes, resulting in an increase in expression of the extracellular matrix components ACAN and COL2A1. Acts as a moderator of angiogenesis in response to injury. The polypeptide is Matrilin-1 (Gallus gallus (Chicken)).